The primary structure comprises 307 residues: Streptomycin 6-kinase (307 aa).

Streptomycin is bound at residue 133–145; that stretch reads LAGLLNRLHSVPA. D201 serves as the catalytic Proton acceptor.

Belongs to the aminoglycoside phosphotransferase family.

The enzyme catalyses streptomycin + ATP = streptomycin 6-phosphate + ADP + H(+). The aminoglycoside phosphotransferases achieve inactivation of their antibiotic substrates by phosphorylation. This Streptomyces griseus protein is Streptomycin 6-kinase (aphD).